An 867-amino-acid polypeptide reads, in one-letter code: V-set and immunoglobulin domain-containing protein 10-like (867 aa).

The N-terminal stretch at 1–27 (MDNPQALPLFLLLASLVGILTLRASSG) is a signal peptide. The Extracellular portion of the chain corresponds to 28–776 (LQQTNFSSAF…RAGPTLSHGA (749 aa)). N-linked (GlcNAc...) asparagine glycosylation occurs at N32. Residues 35 to 45 (SAFSSDSKSSS) are compositionally biased toward low complexity. A disordered region spans residues 35–60 (SAFSSDSKSSSQGLGVEVPSIKPPSW). 3 N-linked (GlcNAc...) asparagine glycosylation sites follow: N88, N96, and N144. The interval 104–186 (LSPVSPFSET…PESKFSAETH (83 aa)) is disordered. Residues 137 to 153 (TVKTPASNISTQVSHTK) are compositionally biased toward polar residues. Basic and acidic residues predominate over residues 159-170 (PDSKFSPDDMDL). Residues 173–186 (SAQSPESKFSAETH) show a composition bias toward polar residues. Ig-like C2-type domains are found at residues 302–394 (PQLS…ADVS) and 402–487 (PTIT…SLLN). C324 and C378 form a disulfide bridge. An N-linked (GlcNAc...) asparagine glycan is attached at N423. The cysteines at positions 428 and 471 are disulfide-linked. N-linked (GlcNAc...) asparagine glycosylation is present at N487. The tract at residues 602–627 (ASGCPPPSRASWAREGRPLAPGGGSR) is disordered. 2 N-linked (GlcNAc...) asparagine glycosylation sites follow: N641 and N650. The helical transmembrane segment at 777–797 (IAGIVLGSLLGLALLAVLLLL) threads the bilayer. At 798 to 867 (CICCLCRFRG…QAQTPVQLSL (70 aa)) the chain is on the cytoplasmic side.

In terms of tissue distribution, expressed in the esophagus, particularly in the suprabasilar layers of the epithelium. Expression is largely reduced in esophageal metaplasia, dysplasia, and adenocarcinoma lesions.

Its subcellular location is the membrane. The polypeptide is V-set and immunoglobulin domain-containing protein 10-like (VSIG10L) (Homo sapiens (Human)).